Consider the following 175-residue polypeptide: MAEVHVIGQIIGATGFSEGSLFCKWGIHTGAAWKLLSGVREGQTQVDTPQTGDMAYWSHPIDLHFATKGLQGWPRLHLQVWSQDSFGRCQLAGYGFCHVPSSPGTHQLDCPTWRPLGSWREQLARAFVGGGPQLLHADTIYSGADRYRLHTAAGGTVHLGIGLLLRHFDRYGVEC.

A C2 B9-type domain is found at 2 to 118; the sequence is AEVHVIGQII…DCPTWRPLGS (117 aa).

It belongs to the B9D family. As to quaternary structure, part of the tectonic-like complex (also named B9 complex). Interacts with TUBG1.

It localises to the cytoplasm. The protein localises to the cytoskeleton. The protein resides in the cilium basal body. Its subcellular location is the cilium axoneme. It is found in the nucleus. Component of the tectonic-like complex, a complex localized at the transition zone of primary cilia and acting as a barrier that prevents diffusion of transmembrane proteins between the cilia and plasma membranes. This chain is B9 domain-containing protein 2 (B9d2), found in Rattus norvegicus (Rat).